The primary structure comprises 360 residues: mRNA cap guanine-N(7) methyltransferase (360 aa).

A disordered region spans residues 1 to 62; that stretch reads MSSSNSRVHE…NRHENNGNAQ (62 aa). A compositionally biased stretch (basic and acidic residues) spans 7-19; the sequence is RVHEEQPPTENRR. One can recognise an mRNA cap 0 methyltransferase domain in the interval 83 to 358; that stretch reads SPIIQLKRFN…FYLAFAFEKR (276 aa). An mRNA-binding site is contributed by 92–93; that stretch reads NN. 6 residues coordinate S-adenosyl-L-methionine: K96, G118, D140, D168, Q191, and Y196.

Belongs to the class I-like SAM-binding methyltransferase superfamily. mRNA cap 0 methyltransferase family. In terms of assembly, interacts with cdk9.

The protein resides in the nucleus. It catalyses the reaction a 5'-end (5'-triphosphoguanosine)-ribonucleoside in mRNA + S-adenosyl-L-methionine = a 5'-end (N(7)-methyl 5'-triphosphoguanosine)-ribonucleoside in mRNA + S-adenosyl-L-homocysteine. In terms of biological role, responsible for methylating the 5'-cap structure of mRNAs. In Schizosaccharomyces pombe (strain 972 / ATCC 24843) (Fission yeast), this protein is mRNA cap guanine-N(7) methyltransferase (pcm1).